A 405-amino-acid chain; its full sequence is 26S proteasome regulatory subunit 8 homolog (405 aa).

Thr-2 bears the N-acetylthreonine mark. 189-196 (GPPGTGKT) is a binding site for ATP.

This sequence belongs to the AAA ATPase family. May form a homodimer or a heterodimer with a related family member. Interacts with OLA1, TMA17, and UBR1. Post-translationally, N-acetylated by NAT1.

It localises to the cytoplasm. The protein resides in the nucleus. In terms of biological role, the 26S proteasome is involved in the ATP-dependent degradation of ubiquitinated proteins. The regulatory (or ATPase) complex confers ATP dependency and substrate specificity to the 26S complex. The chain is 26S proteasome regulatory subunit 8 homolog (RPT6) from Saccharomyces cerevisiae (strain ATCC 204508 / S288c) (Baker's yeast).